A 504-amino-acid chain; its full sequence is L-arabinose isomerase (504 aa).

Positions 308, 335, 352, and 452 each coordinate Mn(2+).

This sequence belongs to the arabinose isomerase family. Requires Mn(2+) as cofactor.

It carries out the reaction beta-L-arabinopyranose = L-ribulose. Its pathway is carbohydrate degradation; L-arabinose degradation via L-ribulose; D-xylulose 5-phosphate from L-arabinose (bacterial route): step 1/3. Functionally, catalyzes the conversion of L-arabinose to L-ribulose. The sequence is that of L-arabinose isomerase from Bifidobacterium adolescentis (strain ATCC 15703 / DSM 20083 / NCTC 11814 / E194a).